Reading from the N-terminus, the 168-residue chain is Outer-membrane lipoprotein YfiB (168 aa).

The signal sequence occupies residues 1–25 (MLPQRLHPSRLLALALFSLVLGLAG). A lipid anchor (N-palmitoyl cysteine) is attached at Cys26. The S-diacylglycerol cysteine moiety is linked to residue Cys26. Residues 53–168 (EGWEFGMSSK…RRVAIIVPAE (116 aa)) enclose the OmpA-like domain.

It belongs to the outer membrane OOP (TC 1.B.6) superfamily. As to quaternary structure, homodimer. Interacts with YfiR. The YfiB-YfiR complex is a 2:2 heterotetramer.

The protein localises to the cell outer membrane. Its activity is regulated as follows. Both lipid anchor in the outer membrane and peptidoglycan binding are required for full activity. Once activated by certain cell stress, the dimeric YfiB transforms from a compact conformation to a stretched conformation, allowing the periplasmic domain of the membrane-anchored YfiB to penetrate the cell wall and sequester the YfiR dimer. GMP enhances the binding affinity between YfiB and YfiR. Functionally, activates the diguanylate cyclase TpbB/YfiN by sequestering YfiR at the outer membrane, which counteracts the YfiR-mediated repression of TpbB/YfiN at the inner membrane and leads to increased c-di-GMP production. May act as a sensor of envelope stress. In terms of biological role, part of the YfiB-TpbB-YfiR (or yfiBNR) system, encoding a tripartite signaling module that modulates intracellular c-di-GMP levels. The system is a key regulator of the small colony variant (SCV) phenotype, and plays an important role in biofilm formation and in vivo persistence. The c-di-GMP produced by TpbB/YfiN stimulates the production of the Pel and Psl exopolysaccharides, which promotes surface attachment, generates an SCV phenotype and confers resistance against phagocytosis. This is Outer-membrane lipoprotein YfiB from Pseudomonas aeruginosa (strain ATCC 15692 / DSM 22644 / CIP 104116 / JCM 14847 / LMG 12228 / 1C / PRS 101 / PAO1).